Consider the following 303-residue polypeptide: Sulfate adenylyltransferase subunit 2 (303 aa).

It belongs to the PAPS reductase family. CysD subfamily. As to quaternary structure, heterodimer composed of CysD, the smaller subunit, and CysN.

It carries out the reaction sulfate + ATP + H(+) = adenosine 5'-phosphosulfate + diphosphate. The protein operates within sulfur metabolism; hydrogen sulfide biosynthesis; sulfite from sulfate: step 1/3. Its function is as follows. With CysN forms the ATP sulfurylase (ATPS) that catalyzes the adenylation of sulfate producing adenosine 5'-phosphosulfate (APS) and diphosphate, the first enzymatic step in sulfur assimilation pathway. APS synthesis involves the formation of a high-energy phosphoric-sulfuric acid anhydride bond driven by GTP hydrolysis by CysN coupled to ATP hydrolysis by CysD. This chain is Sulfate adenylyltransferase subunit 2, found in Bacteroides fragilis (strain YCH46).